We begin with the raw amino-acid sequence, 276 residues long: 1H-3-hydroxy-4-oxoquinaldine 2,4-dioxygenase (276 aa).

The AB hydrolase-1 domain maps to 28–150 (PAILLLPGWC…TLLKDPERWR (123 aa)). Substrate-binding positions include 36–38 (WCH), 100–101 (HS), and W160. H251 functions as the Proton donor/acceptor in the catalytic mechanism.

This sequence belongs to the AB hydrolase superfamily. None. Contrary to most other dioxygenases, this enzyme does not require a cofactor for catalysis. is required as a cofactor.

It catalyses the reaction 3-hydroxy-2-methyl-1H-quinolin-4-one + O2 = N-acetylanthranilate + CO + H(+). Ring-cleaving dioxygenase involved in quinaldine degradation and utilization. The sequence is that of 1H-3-hydroxy-4-oxoquinaldine 2,4-dioxygenase (hod) from Paenarthrobacter nitroguajacolicus (Arthrobacter nitroguajacolicus).